Consider the following 227-residue polypeptide: Cytidylate kinase (227 aa).

12–20 (GPSGAGKGT) lines the ATP pocket.

The protein belongs to the cytidylate kinase family. Type 1 subfamily.

The protein resides in the cytoplasm. The enzyme catalyses CMP + ATP = CDP + ADP. It carries out the reaction dCMP + ATP = dCDP + ADP. This Escherichia fergusonii (strain ATCC 35469 / DSM 13698 / CCUG 18766 / IAM 14443 / JCM 21226 / LMG 7866 / NBRC 102419 / NCTC 12128 / CDC 0568-73) protein is Cytidylate kinase.